The primary structure comprises 156 residues: Pilin-like protein PilA1 (156 aa).

Residues 1–5 (MTRRG) constitute a propeptide, leader sequence. Leucine 6 is modified (N-methylleucine). Residues 6-29 (LTLLELLLVLGILGVLLGLALPLL) traverse the membrane as a helical segment.

The protein localises to the cell inner membrane. The protein resides in the cell outer membrane. Its subcellular location is the periplasm. Functionally, plays an essential role in natural DNA transformation but is not required for pilus biogenesis. In Thermus thermophilus (strain ATCC BAA-163 / DSM 7039 / HB27), this protein is Pilin-like protein PilA1 (pilA1).